Reading from the N-terminus, the 309-residue chain is Thiamine-monophosphate kinase (309 aa).

Mg(2+) contacts are provided by aspartate 41 and aspartate 55. Residue histidine 62 coordinates substrate. Mg(2+) contacts are provided by aspartate 83, aspartate 128, and aspartate 215. Residue 127 to 128 (GD) coordinates ATP. An ATP-binding site is contributed by serine 217. Residue aspartate 218 coordinates Mg(2+). Glutamate 268 serves as a coordination point for substrate.

The protein belongs to the thiamine-monophosphate kinase family.

The enzyme catalyses thiamine phosphate + ATP = thiamine diphosphate + ADP. It participates in cofactor biosynthesis; thiamine diphosphate biosynthesis; thiamine diphosphate from thiamine phosphate: step 1/1. Its function is as follows. Catalyzes the ATP-dependent phosphorylation of thiamine-monophosphate (TMP) to form thiamine-pyrophosphate (TPP), the active form of vitamin B1. In Methanopyrus kandleri (strain AV19 / DSM 6324 / JCM 9639 / NBRC 100938), this protein is Thiamine-monophosphate kinase.